We begin with the raw amino-acid sequence, 81 residues long: Omega-conotoxin-like Vc6.4 (81 aa).

The signal sequence occupies residues 1–22 (MKLTCVMIVAVLFLTANTFVTA). The propeptide occupies 23–51 (VPHSSNVLENLYLKARHEMENPEASKLNT). Intrachain disulfides connect C55/C72, C62/C76, and C71/C80.

The protein belongs to the conotoxin O1 superfamily. In terms of tissue distribution, expressed by the venom duct.

Its subcellular location is the secreted. Omega-conotoxins act at presynaptic membranes, they bind and block voltage-gated calcium channels. Act on high voltage-activated (HVA) calcium currents in molluscan neurons. This is Omega-conotoxin-like Vc6.4 from Conus victoriae (Queen Victoria cone).